A 449-amino-acid chain; its full sequence is Probable glycine dehydrogenase (decarboxylating) subunit 1 (449 aa).

It belongs to the GcvP family. N-terminal subunit subfamily. In terms of assembly, the glycine cleavage system is composed of four proteins: P, T, L and H. In this organism, the P 'protein' is a heterodimer of two subunits.

The catalysed reaction is N(6)-[(R)-lipoyl]-L-lysyl-[glycine-cleavage complex H protein] + glycine + H(+) = N(6)-[(R)-S(8)-aminomethyldihydrolipoyl]-L-lysyl-[glycine-cleavage complex H protein] + CO2. In terms of biological role, the glycine cleavage system catalyzes the degradation of glycine. The P protein binds the alpha-amino group of glycine through its pyridoxal phosphate cofactor; CO(2) is released and the remaining methylamine moiety is then transferred to the lipoamide cofactor of the H protein. The polypeptide is Probable glycine dehydrogenase (decarboxylating) subunit 1 (Solibacter usitatus (strain Ellin6076)).